The sequence spans 173 residues: MLALADNILRIINFLFLVISIGLISSLLNTQHRHSSRVNYCMFACAYGIFTDSLYGVFANFIEPLAWPLVLFTLDFLNFVFTFTAGTVLAVGIRAHSCNNSSYVDSNKITQGSGTRCRQAQAAVAFLYFSCAIFLAKTLMSVFNMISNGAFGSGSFSKRRRTGQVGVPTISQV.

Residues 1–10 (MLALADNILR) lie on the Cytoplasmic side of the membrane. A helical membrane pass occupies residues 11–30 (IINFLFLVISIGLISSLLNT). Topologically, residues 31–37 (QHRHSSR) are extracellular. Residues 38–62 (VNYCMFACAYGIFTDSLYGVFANFI) traverse the membrane as a helical segment. The Cytoplasmic segment spans residues 63 to 75 (EPLAWPLVLFTLD). Residues 76–93 (FLNFVFTFTAGTVLAVGI) traverse the membrane as a helical segment. The Extracellular segment spans residues 94-137 (RAHSCNNSSYVDSNKITQGSGTRCRQAQAAVAFLYFSCAIFLAK). Residues 138-157 (TLMSVFNMISNGAFGSGSFS) traverse the membrane as a helical segment. Over 158-173 (KRRRTGQVGVPTISQV) the chain is Cytoplasmic.

It belongs to the NCE102 family.

Its subcellular location is the cell membrane. In terms of biological role, involved in membrane organization. Required for the formation of membrane compartments of CAN1 (MCCs), localization of CAN1 at the MCCs and subsequent invagination of the plasma membrane at the MCCs sites. Involved in eisosome organization and might act as a sensor of sphingolipids that regulates plasma membrane function. Involved in a novel pathway of export of proteins that lack a cleavable signal sequence. It may be an accessory subunit to an essential core component of the non-classical export machinery. Non-classical export pathway also functions as an alternative clearance/detoxification pathway to eliminate damaged material, when the basic repair pathway is not sufficient. This Saccharomyces cerevisiae (strain ATCC 204508 / S288c) (Baker's yeast) protein is Non-classical export protein 2 (NCE102).